Here is a 338-residue protein sequence, read N- to C-terminus: Methionine import ATP-binding protein MetN 2 (338 aa).

The region spanning 2-242 is the ABC transporter domain; the sequence is IEIEKVCVDF…PQHAFTQQLV (241 aa). 39-46 is an ATP binding site; the sequence is GTSGAGKS.

This sequence belongs to the ABC transporter superfamily. Methionine importer (TC 3.A.1.24) family. As to quaternary structure, the complex is composed of two ATP-binding proteins (MetN), two transmembrane proteins (MetI) and a solute-binding protein (MetQ).

The protein resides in the cell inner membrane. The catalysed reaction is L-methionine(out) + ATP + H2O = L-methionine(in) + ADP + phosphate + H(+). The enzyme catalyses D-methionine(out) + ATP + H2O = D-methionine(in) + ADP + phosphate + H(+). Part of the ABC transporter complex MetNIQ involved in methionine import. Responsible for energy coupling to the transport system. In Salmonella choleraesuis (strain SC-B67), this protein is Methionine import ATP-binding protein MetN 2.